The sequence spans 443 residues: Probable cytosolic iron-sulfur protein assembly protein 1 (443 aa).

Disordered stretches follow at residues 1–27 (MSDP…WQTA) and 95–124 (REEQ…DDDE). The segment covering 8 to 21 (TLSPLATLTPPSSS) has biased composition (low complexity). WD repeat units lie at residues 14–57 (TLTP…LLHS) and 61–103 (GHKR…GNED). The segment covering 113-124 (AEDEDGRDDDDE) has biased composition (acidic residues). WD repeat units follow at residues 135–174 (GHES…NFET), 180–219 (EHDG…WVQV), 221–248 (CIAG…KDFR), 255–294 (SEEQ…RAEN), 323–362 (VHER…QTPN), and 391–440 (AHSV…DPPQ).

Belongs to the WD repeat CIA1 family.

Its function is as follows. Essential component of the cytosolic iron-sulfur (Fe/S) protein assembly machinery. Required for the maturation of extramitochondrial Fe/S proteins. In Phaeosphaeria nodorum (strain SN15 / ATCC MYA-4574 / FGSC 10173) (Glume blotch fungus), this protein is Probable cytosolic iron-sulfur protein assembly protein 1.